The following is a 598-amino-acid chain: MVDWASDSDNDKFEWDTDGEAETSSAPALRNIDAPGPSTRLPQDANGKANGSGALVAEFMGMGFPKEMILKAIKEIGDTDTEQLLELLLTYQAIGGDASVGNCSASACAPQTLEVDEEEDDTNWDEYDTAGNCDRTPHSDGSGDEDFFQEMSEKDEKMKSLVNMGFPEDEAKMAIDRCGLDAPVAVLVDSIYASQEAGNGYSANLSDYEDTEFSSFGGRKKTRFVDGSKKRKRYGSGPSGNQVPFDGSHEEPMPLPNPMVGFSLPNERLRSVHRNLPDQALGPPFFYYENVALAPKGVWTTISRFLYDIQPEFVDSKYFCAAARKRGYIHNLPIENRSPVLPMPPKTISEAFPNTKRWWPSWDPRRQFNCLQTCMASAKLTERIRCALGRFSDVPTPQVQKYVLDECRKWNLVWVGKNKVAPLEPDEMEFLLGYPRNHTRGVSRTERYRALGNSFQVDTVAYHLSVLRDLFPNGMNVLSLFSGIGGAEVALHRLGIHMKTVISVEKSEVNRTILKSWWDQTQTGTLIEIADVRHLTTERIETFIRRFGGFDLVIGGSPCNNLAGSNRHHRDGLEGEHSALFYDYIRILEHVKATMSAV.

Disordered regions lie at residues 1–49 and 114–146; these read MVDW…NGKA and EVDEEEDDTNWDEYDTAGNCDRTPHSDGSGDED. Residues 42–91 enclose the UBA 1 domain; it reads PQDANGKANGSGALVAEFMGMGFPKEMILKAIKEIGDTDTEQLLELLLTY. Over residues 114–128 the composition is skewed to acidic residues; the sequence is EVDEEEDDTNWDEYD. Residues 150 to 194 form the UBA 2 domain; that stretch reads EMSEKDEKMKSLVNMGFPEDEAKMAIDRCGLDAPVAVLVDSIYAS. The segment at 227-252 is disordered; the sequence is GSKKRKRYGSGPSGNQVPFDGSHEEP. Residues 272–598 enclose the SAM-dependent MTase DRM-type domain; sequence VHRNLPDQAL…EHVKATMSAV (327 aa).

It belongs to the class I-like SAM-binding methyltransferase superfamily. DRM-methyltransferase family. Interacts (via UBA domains) with EIF4A.

It is found in the nucleus. It catalyses the reaction a 2'-deoxycytidine in DNA + S-adenosyl-L-methionine = a 5-methyl-2'-deoxycytidine in DNA + S-adenosyl-L-homocysteine + H(+). Involved in de novo DNA methylation. Required for CpG and non-CpG methylation. Required for normal establishment and maintenance of RNA-directed DNA methylation (RdDM) mediated by small interfering RNAs (siRNAs). Regulates proper plant development in both vegetative and reproductive stages through DNA methylation. The chain is DNA (cytosine-5)-methyltransferase DRM2 from Oryza sativa subsp. japonica (Rice).